We begin with the raw amino-acid sequence, 214 residues long: Ras-related protein Rab-11A (214 aa).

Residues 20–28, 39–45, 68–72, 126–129, and 156–158 each bind GTP; these read GDSGVGKSN, SLETKST, DTAGQ, NKSD, and SAL. The Effector region motif lies at 42 to 50; that stretch reads TKSTIGVEF. S-geranylgeranyl cysteine attachment occurs at residues Cys213 and Cys214.

Belongs to the small GTPase superfamily. Rab family.

It localises to the contractile vacuole membrane. In terms of biological role, required for normal contractile vacuole structure and function. Cells expressing a dominant negative rab11A exhibit a more extensive contractile vacuole network and enlarged contractile vacuole bladders. These cells exhibit a functional defect in osmotic regulation where cells immersed in water become rounded and detach from the surface, and contain swollen contractile vacuoles. The chain is Ras-related protein Rab-11A (rab11A) from Dictyostelium discoideum (Social amoeba).